The primary structure comprises 576 residues: Arginine--tRNA ligase (576 aa).

Residues 132 to 142 (ANPTGPMHIGH) carry the 'HIGH' region motif.

This sequence belongs to the class-I aminoacyl-tRNA synthetase family. In terms of assembly, monomer.

The protein localises to the cytoplasm. It carries out the reaction tRNA(Arg) + L-arginine + ATP = L-arginyl-tRNA(Arg) + AMP + diphosphate. This is Arginine--tRNA ligase from Ehrlichia chaffeensis (strain ATCC CRL-10679 / Arkansas).